Reading from the N-terminus, the 248-residue chain is 5'-nucleotidase SurE (248 aa).

A divalent metal cation-binding residues include D8, D9, S39, and N91.

The protein belongs to the SurE nucleotidase family. The cofactor is a divalent metal cation.

It localises to the cytoplasm. The catalysed reaction is a ribonucleoside 5'-phosphate + H2O = a ribonucleoside + phosphate. Nucleotidase that shows phosphatase activity on nucleoside 5'-monophosphates. In Shewanella amazonensis (strain ATCC BAA-1098 / SB2B), this protein is 5'-nucleotidase SurE.